The sequence spans 794 residues: DNA ligase (794 aa).

NAD(+) is bound by residues Asp-35–Asp-39, Ser-84–Leu-85, and Glu-126. Lys-128 serves as the catalytic N6-AMP-lysine intermediate. 4 residues coordinate NAD(+): Arg-149, Glu-186, Lys-302, and Lys-326. Zn(2+) is bound by residues Cys-420, Cys-423, Cys-450, and Cys-456. The BRCT domain occupies Val-711–His-794.

This sequence belongs to the NAD-dependent DNA ligase family. LigA subfamily. Requires Mg(2+) as cofactor. The cofactor is Mn(2+).

The catalysed reaction is NAD(+) + (deoxyribonucleotide)n-3'-hydroxyl + 5'-phospho-(deoxyribonucleotide)m = (deoxyribonucleotide)n+m + AMP + beta-nicotinamide D-nucleotide.. DNA ligase that catalyzes the formation of phosphodiester linkages between 5'-phosphoryl and 3'-hydroxyl groups in double-stranded DNA using NAD as a coenzyme and as the energy source for the reaction. It is essential for DNA replication and repair of damaged DNA. The chain is DNA ligase from Pseudomonas paraeruginosa (strain DSM 24068 / PA7) (Pseudomonas aeruginosa (strain PA7)).